The primary structure comprises 197 residues: FMN-dependent NADH:quinone oxidoreductase (197 aa).

FMN-binding positions include Ser10 and 16–18; that span reads SIS.

It belongs to the azoreductase type 1 family. In terms of assembly, homodimer. FMN is required as a cofactor.

The catalysed reaction is 2 a quinone + NADH + H(+) = 2 a 1,4-benzosemiquinone + NAD(+). It carries out the reaction N,N-dimethyl-1,4-phenylenediamine + anthranilate + 2 NAD(+) = 2-(4-dimethylaminophenyl)diazenylbenzoate + 2 NADH + 2 H(+). Quinone reductase that provides resistance to thiol-specific stress caused by electrophilic quinones. Its function is as follows. Also exhibits azoreductase activity. Catalyzes the reductive cleavage of the azo bond in aromatic azo compounds to the corresponding amines. The chain is FMN-dependent NADH:quinone oxidoreductase from Erythrobacter litoralis (strain HTCC2594).